Here is a 113-residue protein sequence, read N- to C-terminus: Hydrogenase maturation factor HybF (113 aa).

Residues histidine 2 and glutamate 3 each coordinate Ni(2+). Positions 73, 76, 89, and 92 each coordinate Zn(2+).

Belongs to the HypA/HybF family. HybF subfamily.

Its function is as follows. Involved in the maturation of [NiFe] hydrogenases. Required for nickel insertion into the metal center of the hydrogenase. The polypeptide is Hydrogenase maturation factor HybF (Proteus vulgaris).